Consider the following 164-residue polypeptide: Large ribosomal subunit protein uL10 (164 aa).

The protein belongs to the universal ribosomal protein uL10 family. As to quaternary structure, part of the ribosomal stalk of the 50S ribosomal subunit. The N-terminus interacts with L11 and the large rRNA to form the base of the stalk. The C-terminus forms an elongated spine to which L12 dimers bind in a sequential fashion forming a multimeric L10(L12)X complex.

Functionally, forms part of the ribosomal stalk, playing a central role in the interaction of the ribosome with GTP-bound translation factors. In Pseudoalteromonas translucida (strain TAC 125), this protein is Large ribosomal subunit protein uL10.